The following is a 35-amino-acid chain: Photosystem II reaction center protein T (35 aa).

A helical membrane pass occupies residues 3–23 (ALVYTFLLVGTLGIIFFAIFF).

This sequence belongs to the PsbT family. In terms of assembly, PSII is composed of 1 copy each of membrane proteins PsbA, PsbB, PsbC, PsbD, PsbE, PsbF, PsbH, PsbI, PsbJ, PsbK, PsbL, PsbM, PsbT, PsbY, PsbZ, Psb30/Ycf12, at least 3 peripheral proteins of the oxygen-evolving complex and a large number of cofactors. It forms dimeric complexes.

It localises to the plastid. It is found in the chloroplast thylakoid membrane. Its function is as follows. Found at the monomer-monomer interface of the photosystem II (PS II) dimer, plays a role in assembly and dimerization of PSII. PSII is a light-driven water plastoquinone oxidoreductase, using light energy to abstract electrons from H(2)O, generating a proton gradient subsequently used for ATP formation. The chain is Photosystem II reaction center protein T from Marchantia polymorpha (Common liverwort).